Consider the following 163-residue polypeptide: MASIAQAAKSLLLKEFASAFALSMRQFFAPKATLNYPHEKGPVSPRFRGEHALRRYPNGEERCIACKLCEAICPAQAITIEAGPRRNDGTRRTVRYDIDMVKCIYCGFCQEACPVDAIVEGPNFEFATETREELYYDKDKLLANGDHWEREIARNIAMDAPYR.

4Fe-4S ferredoxin-type domains lie at 53-83 and 94-123; these read LRRY…IEAG and VRYD…EGPN. Positions 63, 66, 69, 73, 103, 106, 109, and 113 each coordinate [4Fe-4S] cluster.

The protein belongs to the complex I 23 kDa subunit family. NDH-1 is composed of 14 different subunits. Subunits NuoA, H, J, K, L, M, N constitute the membrane sector of the complex. It depends on [4Fe-4S] cluster as a cofactor.

It is found in the cell inner membrane. It catalyses the reaction a quinone + NADH + 5 H(+)(in) = a quinol + NAD(+) + 4 H(+)(out). Its function is as follows. NDH-1 shuttles electrons from NADH, via FMN and iron-sulfur (Fe-S) centers, to quinones in the respiratory chain. The immediate electron acceptor for the enzyme in this species is believed to be ubiquinone. Couples the redox reaction to proton translocation (for every two electrons transferred, four hydrogen ions are translocated across the cytoplasmic membrane), and thus conserves the redox energy in a proton gradient. The sequence is that of NADH-quinone oxidoreductase subunit I from Brucella melitensis biotype 1 (strain ATCC 23456 / CCUG 17765 / NCTC 10094 / 16M).